A 304-amino-acid chain; its full sequence is D-alanine--D-alanine ligase (304 aa).

Residues 104–299 enclose the ATP-grasp domain; that stretch reads KMVWLSCGLP…FEALCLAILA (196 aa). ATP is bound at residue 130-185; the sequence is ARDLGLPIFVKPVHEGSSMGATKVTEAGQLRAAWELAARYDSLVIAEEFISGQELT. 3 residues coordinate Mg(2+): Asp253, Glu266, and Asn268.

This sequence belongs to the D-alanine--D-alanine ligase family. Mg(2+) serves as cofactor. It depends on Mn(2+) as a cofactor.

Its subcellular location is the cytoplasm. The enzyme catalyses 2 D-alanine + ATP = D-alanyl-D-alanine + ADP + phosphate + H(+). Its pathway is cell wall biogenesis; peptidoglycan biosynthesis. Cell wall formation. The sequence is that of D-alanine--D-alanine ligase from Azoarcus sp. (strain BH72).